Here is a 508-residue protein sequence, read N- to C-terminus: Maturase K (508 aa).

Belongs to the intron maturase 2 family. MatK subfamily.

The protein localises to the plastid. It is found in the chloroplast. Usually encoded in the trnK tRNA gene intron. Probably assists in splicing its own and other chloroplast group II introns. The protein is Maturase K of Wolffia arrhiza (Rootless water-meal).